A 99-amino-acid chain; its full sequence is NAD(P)H-quinone oxidoreductase subunit 4L, chloroplastic (99 aa).

The next 3 helical transmembrane spans lie at 1–21 (MFEQ…FGLI), 31–51 (MSLE…SNLF), and 59–79 (IFTL…LAIA).

This sequence belongs to the complex I subunit 4L family. As to quaternary structure, NDH is composed of at least 16 different subunits, 5 of which are encoded in the nucleus.

It localises to the plastid. The protein resides in the chloroplast thylakoid membrane. It carries out the reaction a plastoquinone + NADH + (n+1) H(+)(in) = a plastoquinol + NAD(+) + n H(+)(out). It catalyses the reaction a plastoquinone + NADPH + (n+1) H(+)(in) = a plastoquinol + NADP(+) + n H(+)(out). Its function is as follows. NDH shuttles electrons from NAD(P)H:plastoquinone, via FMN and iron-sulfur (Fe-S) centers, to quinones in the photosynthetic chain and possibly in a chloroplast respiratory chain. The immediate electron acceptor for the enzyme in this species is believed to be plastoquinone. Couples the redox reaction to proton translocation, and thus conserves the redox energy in a proton gradient. This Adiantum capillus-veneris (Maidenhair fern) protein is NAD(P)H-quinone oxidoreductase subunit 4L, chloroplastic.